The following is a 201-amino-acid chain: Superoxide dismutase [Mn] (201 aa).

The Mn(2+) site is built by H27, H81, D163, and H167.

This sequence belongs to the iron/manganese superoxide dismutase family. Homodimer. Mn(2+) is required as a cofactor.

The protein localises to the secreted. The catalysed reaction is 2 superoxide + 2 H(+) = H2O2 + O2. Functionally, destroys superoxide anion radicals which are normally produced within the cells and which are toxic to biological systems. In Streptococcus pyogenes serotype M3 (strain ATCC BAA-595 / MGAS315), this protein is Superoxide dismutase [Mn] (sodA).